The chain runs to 494 residues: Lysine--tRNA ligase (494 aa).

2 residues coordinate Mg(2+): glutamate 407 and glutamate 414.

This sequence belongs to the class-II aminoacyl-tRNA synthetase family. Homodimer. It depends on Mg(2+) as a cofactor.

It localises to the cytoplasm. It carries out the reaction tRNA(Lys) + L-lysine + ATP = L-lysyl-tRNA(Lys) + AMP + diphosphate. The protein is Lysine--tRNA ligase of Lactococcus lactis subsp. cremoris (strain SK11).